The sequence spans 440 residues: Methylenetetrahydrofolate--tRNA-(uracil-5-)-methyltransferase TrmFO (440 aa).

Position 14–19 (14–19 (GAGLAG)) interacts with FAD.

It belongs to the MnmG family. TrmFO subfamily. The cofactor is FAD.

It localises to the cytoplasm. The catalysed reaction is uridine(54) in tRNA + (6R)-5,10-methylene-5,6,7,8-tetrahydrofolate + NADH + H(+) = 5-methyluridine(54) in tRNA + (6S)-5,6,7,8-tetrahydrofolate + NAD(+). The enzyme catalyses uridine(54) in tRNA + (6R)-5,10-methylene-5,6,7,8-tetrahydrofolate + NADPH + H(+) = 5-methyluridine(54) in tRNA + (6S)-5,6,7,8-tetrahydrofolate + NADP(+). Catalyzes the folate-dependent formation of 5-methyl-uridine at position 54 (M-5-U54) in all tRNAs. In Bdellovibrio bacteriovorus (strain ATCC 15356 / DSM 50701 / NCIMB 9529 / HD100), this protein is Methylenetetrahydrofolate--tRNA-(uracil-5-)-methyltransferase TrmFO.